We begin with the raw amino-acid sequence, 227 residues long: Transmembrane emp24 domain-containing protein 1 (227 aa).

The signal sequence occupies residues 1–24; the sequence is MMAAGAAVALALWLLLPAVGVGEA. Topologically, residues 25 to 194 are extracellular; the sequence is GPPPIQDGEF…LQEDNLERVN (170 aa). The 83-residue stretch at 43–125 folds into the GOLD domain; the sequence is KQCFYQSAPA…EKLVFFELIF (83 aa). Residues 145–170 are a coiled coil; that stretch reads EMLDVKMEDIKESIETMRTRLERSIQ. Residues 195–215 form a helical membrane-spanning segment; the sequence is FWSAANVAVLLLVAVLQVCTL. Over 216–227 the chain is Cytoplasmic; it reads KRFFHDKRPVPT. The COPII vesicle coat-binding signature appears at 218-219; that stretch reads FF. The short motif at 218-227 is the COPI vesicle coat-binding element; sequence FFHDKRPVPT.

The protein belongs to the EMP24/GP25L family. As to quaternary structure, homodimer in endoplasmic reticulum, endoplasmic reticulum-Golgi intermediate compartment and cis-Golgi network. Interacts with IL1RL1. Interacts with RNF26; this interaction is important to modulate innate immune signaling through the cGAS-STING pathway. Widely expressed.

It is found in the cell membrane. The protein localises to the endoplasmic reticulum membrane. It localises to the golgi apparatus. Its subcellular location is the cis-Golgi network membrane. The protein resides in the endoplasmic reticulum-Golgi intermediate compartment membrane. Potential role in vesicular protein trafficking, mainly in the early secretory pathway. May act as a cargo receptor at the lumenal side for incorporation of secretory cargo molecules into transport vesicles and may be involved in vesicle coat formation at the cytoplasmic side. Plays a positive role in IL-33-mediated IL-8 and IL-6 production by interacting with interleukin-33 receptor IL1RL1. Plays also a role in the modulation of innate immune signaling through the cGAS-STING pathway by interacting with RNF26. The polypeptide is Transmembrane emp24 domain-containing protein 1 (Tmed1) (Mus musculus (Mouse)).